A 484-amino-acid polypeptide reads, in one-letter code: Probable cobyric acid synthase (484 aa).

Positions 247–433 (ELHIQIVKLP…LHGIFHNFAF (187 aa)) constitute a GATase cobBQ-type domain. Cysteine 325 acts as the Nucleophile in catalysis. The active site involves histidine 425.

This sequence belongs to the CobB/CobQ family. CobQ subfamily.

Its pathway is cofactor biosynthesis; adenosylcobalamin biosynthesis. Its function is as follows. Catalyzes amidations at positions B, D, E, and G on adenosylcobyrinic A,C-diamide. NH(2) groups are provided by glutamine, and one molecule of ATP is hydrogenolyzed for each amidation. This chain is Probable cobyric acid synthase, found in Thermococcus onnurineus (strain NA1).